A 332-amino-acid chain; its full sequence is DNA-directed RNA polymerase subunit alpha (332 aa).

Residues 1 to 230 form an alpha N-terminal domain (alpha-NTD) region; that stretch reads MKKITTSAYM…KQMSIFNNVL (230 aa). The interval 246–332 is alpha C-terminal domain (alpha-CTD); it reads EHSKLLESVE…LRKKISELKS (87 aa).

This sequence belongs to the RNA polymerase alpha chain family. In terms of assembly, homodimer. The RNAP catalytic core consists of 2 alpha, 1 beta, 1 beta' and 1 omega subunit. When a sigma factor is associated with the core the holoenzyme is formed, which can initiate transcription.

The catalysed reaction is RNA(n) + a ribonucleoside 5'-triphosphate = RNA(n+1) + diphosphate. Its function is as follows. DNA-dependent RNA polymerase catalyzes the transcription of DNA into RNA using the four ribonucleoside triphosphates as substrates. This Campylobacter fetus subsp. fetus (strain 82-40) protein is DNA-directed RNA polymerase subunit alpha.